The following is a 276-amino-acid chain: Undecaprenyl-diphosphatase (276 aa).

Helical transmembrane passes span 1–21 (MSWL…FLPV), 39–59 (AGAS…LIYF), 84–104 (YRLG…GLLF), 115–135 (LWLV…AEYY), 159–179 (LALM…LFLG), 188–208 (FGFL…LPDA), 222–242 (QLIV…AWFL), and 253–273 (FVGY…TGVL).

Belongs to the UppP family.

Its subcellular location is the cell membrane. It catalyses the reaction di-trans,octa-cis-undecaprenyl diphosphate + H2O = di-trans,octa-cis-undecaprenyl phosphate + phosphate + H(+). In terms of biological role, catalyzes the dephosphorylation of undecaprenyl diphosphate (UPP). Confers resistance to bacitracin. The sequence is that of Undecaprenyl-diphosphatase from Mycolicibacterium smegmatis (strain ATCC 700084 / mc(2)155) (Mycobacterium smegmatis).